The chain runs to 235 residues: Rab-like protein 3 (235 aa).

Residues 1–235 (MASLDRVKVL…GGNFKSLHYD (235 aa)) form a small GTPase-like region. GTP-binding positions include 16-21 (GVGKSS), 148-150 (KLD), and 179-180 (DC).

It belongs to the small GTPase superfamily. Rab family. In terms of assembly, homodimer.

Required for KRAS signaling regulation and modulation of cell proliferation. Regulator of KRAS prenylation, and probably prenylation of other small GTPases. Required for lymphocyte development and function. Not required for myeloid cell development. This Xenopus tropicalis (Western clawed frog) protein is Rab-like protein 3 (rabl3).